We begin with the raw amino-acid sequence, 119 residues long: Ribosome-binding factor A (119 aa).

Belongs to the RbfA family. Monomer. Binds 30S ribosomal subunits, but not 50S ribosomal subunits or 70S ribosomes.

Its subcellular location is the cytoplasm. One of several proteins that assist in the late maturation steps of the functional core of the 30S ribosomal subunit. Associates with free 30S ribosomal subunits (but not with 30S subunits that are part of 70S ribosomes or polysomes). Required for efficient processing of 16S rRNA. May interact with the 5'-terminal helix region of 16S rRNA. This chain is Ribosome-binding factor A, found in Buchnera aphidicola subsp. Acyrthosiphon pisum (strain Tuc7).